The sequence spans 395 residues: Chalcone synthase (395 aa).

Cysteine 169 is an active-site residue.

It belongs to the thiolase-like superfamily. Chalcone/stilbene synthases family.

It carries out the reaction (E)-4-coumaroyl-CoA + 3 malonyl-CoA + 3 H(+) = 2',4,4',6'-tetrahydroxychalcone + 3 CO2 + 4 CoA. It participates in secondary metabolite biosynthesis; flavonoid biosynthesis. The primary product of this enzyme is 4,2',4',6'-tetrahydroxychalcone (also termed naringenin-chalcone or chalcone) which can under specific conditions spontaneously isomerize into naringenin. This Pinus strobus (Eastern white pine) protein is Chalcone synthase (CHS).